Consider the following 76-residue polypeptide: Esculentin-2MT1 (76 aa).

The N-terminal stretch at 1–22 is a signal peptide; sequence MFTMKKPLLLLFFLGTISLSLC. Positions 23-37 are excised as a propeptide; it reads EEERNADEDDGEKEV. Residues cysteine 70 and cysteine 76 are joined by a disulfide bond.

The protein belongs to the frog skin active peptide (FSAP) family. Esculentin subfamily. As to expression, expressed by the skin glands.

It localises to the secreted. In terms of biological role, antimicrobial peptide. This Amolops mantzorum (Sichuan torrent frog) protein is Esculentin-2MT1.